The sequence spans 391 residues: MHLIFLLFLAPFCSAAVFQLPTKSTGSLRAKLIRAGKYQEFLITQHAARLNTISQPISDYSDEVYLGNFTVGTPPQPVSLVLDTGSANMWVIDASCDNMFCNGWIGSNYTRQKFDTSKSSSFSRENRKFSIQYGKGLCSGYLGTDTVGLGGGLTIRKQELGIANKLDVDFAVQPMDGIFGLAWPALAVDQITPPMQNLISQLDVPVFSVWLDRKIQASHGGSAGMITYGGIDTKNCDAGVTYVPLTAKTYWQFKMDGFAVGTYSQYGYNQVISDTGSSWISAPYAMINDIATQTHATWDEMNEIYTVKCSTMKTQPDLVFTIGGALFPVKSVEYILDIGLDEGKCALAISPLMASGFGPSWILGDVFIRQYCNIYDIGNARIGFANAHHSF.

The N-terminal stretch at 1–15 (MHLIFLLFLAPFCSA) is a signal peptide. The region spanning 65 to 385 (YLGNFTVGTP…DIGNARIGFA (321 aa)) is the Peptidase A1 domain. Asn-68 is a glycosylation site (N-linked (GlcNAc...) asparagine). Asp-83 is an active-site residue. Asn-108 carries N-linked (GlcNAc...) asparagine glycosylation. Asp-274 is an active-site residue. Cys-309 and Cys-345 form a disulfide bridge.

It belongs to the peptidase A1 family. Expressed in intestinal cells.

It localises to the secreted. Functionally, aspartic proteinase. In Caenorhabditis elegans, this protein is Aspartic protease 17.